Here is a 163-residue protein sequence, read N- to C-terminus: Cyanate hydratase (163 aa).

Active-site residues include R103, E106, and S129.

It belongs to the cyanase family.

The enzyme catalyses cyanate + hydrogencarbonate + 3 H(+) = NH4(+) + 2 CO2. In terms of biological role, catalyzes the reaction of cyanate with bicarbonate to produce ammonia and carbon dioxide. This chain is Cyanate hydratase, found in Ajellomyces capsulatus (strain H143) (Darling's disease fungus).